Reading from the N-terminus, the 718-residue chain is Scarecrow-like protein 9 (718 aa).

The disordered stretch occupies residues 305-338 (VEKKKASDAQGGKRRARGRGRGRGRGGGGGQNGK). The span at 316-328 (GKRRARGRGRGRG) shows a compositional bias: basic residues. The region spanning 335–713 (QNGKKEVVDL…RTVMALSVWK (379 aa)) is the GRAS domain. Residues 342 to 402 (VDLRSLLIHC…EARLAGTGSQ (61 aa)) form a leucine repeat I (LRI) region. The segment at 421 to 484 (HQLFLACCPF…YGSPKVRITG (64 aa)) is VHIID. Residues 452–456 (VHVID) carry the VHIID motif. Residues 500 to 532 (ETGQRLAAYAKLFGVPFEYKAIAKKWDAIQLED) are leucine repeat II (LRII). Residues 541–635 (TVVNCLYRAE…MEVFGREALN (95 aa)) are PFYRE. Positions 638–713 (ACEGWERVER…RTVMALSVWK (76 aa)) are SAW.

It belongs to the GRAS family. In terms of tissue distribution, expressed in cotyledons, leaves and flowers, and in the elongation zone in root.

It localises to the nucleus. Functionally, probable transcription factor involved in plant development. The chain is Scarecrow-like protein 9 (SCL9) from Arabidopsis thaliana (Mouse-ear cress).